We begin with the raw amino-acid sequence, 234 residues long: Meiotically up-regulated gene 35 protein (234 aa).

Basic and acidic residues predominate over residues 126 to 156 (DSSGDLTSTDKERDVSPVSHSEKPYWDRYDL). The interval 126 to 176 (DSSGDLTSTDKERDVSPVSHSEKPYWDRYDLDQPSNQDVEESRNLVQEPKH) is disordered. Phosphoserine is present on residues Ser127 and Ser128. A Phosphothreonine modification is found at Thr132. Ser141 is modified (phosphoserine).

The protein resides in the cytoplasm. Its function is as follows. Has a role in meiosis. This is Meiotically up-regulated gene 35 protein (mug35) from Schizosaccharomyces pombe (strain 972 / ATCC 24843) (Fission yeast).